The sequence spans 750 residues: Rho GTPase-activating protein 9 (750 aa).

The region spanning 22-88 (PRGSQLCALY…PAAYMIEESI (67 aa)) is the SH3 domain. Disordered regions lie at residues 120-187 (ALPS…LMSE) and 242-319 (WKPP…LLDD). Positions 163 to 180 (RSLSQEDLPSEASASTAG) are enriched in polar residues. Residues 213–247 (LQRLDAWEQHLDPNSGRCFYINSLTGCKSWKPPRR) form the WW domain. Composition is skewed to polar residues over residues 251-270 (ETNP…NDVL) and 291-300 (GSLSLSQRTS). The segment covering 301–317 (QLDPPALQAPRPLPQLL) has biased composition (low complexity). The PH domain occupies 322 to 435 (EVEKSGLLNM…WHRALRTVIE (114 aa)). 3 lipid binding regions span residues 342–345 (RKNW), 397–399 (SSR), and 432–669 (TVIE…CLSQ). The span at 446–462 (EAPTGRDQGSGDRENPL) shows a compositional bias: basic and acidic residues. The tract at residues 446-488 (EAPTGRDQGSGDRENPLELRLSGSGPAELSAGEDEEEESELVS) is disordered. Phosphoserine is present on Ser-475. Over residues 476–485 (AGEDEEEESE) the composition is skewed to acidic residues. Ser-500 bears the Phosphoserine mark. One can recognise a Rho-GAP domain in the interval 542-749 (CQLESLCQRE…LMLTNFTSLF (208 aa)).

In terms of assembly, interacts with FASLG. Predominantly expressed in peripheral blood leukocytes, spleen, and thymus.

In terms of biological role, GTPase activator for the Rho-type GTPases by converting them to an inactive GDP-bound state. Has a substantial GAP activity toward CDC42 and RAC1 and less toward RHOA. Has a role in regulating adhesion of hematopoietic cells to the extracellular matrix. Binds phosphoinositides, and has the highest affinity for phosphatidylinositol 3,4,5-trisphosphate, followed by phosphatidylinositol 3,4-bisphosphate and phosphatidylinositol 4,5-bisphosphate. The chain is Rho GTPase-activating protein 9 (ARHGAP9) from Homo sapiens (Human).